A 312-amino-acid polypeptide reads, in one-letter code: Phospholipid phosphatase 3 (312 aa).

The Cytoplasmic segment spans residues 1–33 (MQSYKYDKAIVPESKNGGSPALNNNPRKGGSKR). Ser19 carries the phosphoserine modification. Residues 34–54 (VLLICLDLFCLFMAALPFLII) traverse the membrane as a helical segment. Over 55 to 85 (ETSTIKPYRRGFYCNDESIKYPLKVSETIND) the chain is Extracellular. The chain crosses the membrane as a helical span at residues 86 to 106 (AVLCAVGIVIAILRIITGEFY). The Cytoplasmic portion of the chain corresponds to 107-123 (RIYYLKEKSRSTIQNPY). Positions 109-110 (YY) match the Dityrosine basolateral targeting motif motif. The chain crosses the membrane as a helical span at residues 124–144 (VAALYKQVGCFLFGCAISQSF). Over 145–194 (TDIAKVSIGRLRPHFLSVCDPDFSQINCSEGYIQNYRCRGEDSKVQEARK) the chain is Extracellular. A phosphatase sequence motif I region spans residues 149-157 (KVSIGRLRP). Residue Asn171 is glycosylated (N-linked (GlcNAc...) asparagine). The short motif at 183–185 (RGE) is the Integrin-binding motif element. A helical membrane pass occupies residues 195–215 (SFFSGHASFSMFTMLYLVLYL). The phosphatase sequence motif II stretch occupies residues 197–200 (FSGH). Residue His200 is the Proton donors of the active site. The Cytoplasmic segment spans residues 216 to 226 (QARFTWRGARL). The chain crosses the membrane as a helical span at residues 227–244 (LRPLLQFTLLMMAFYTGL). Positions 245–256 (SRVSDYKHHPSD) are phosphatase sequence motif III. Residues 245–258 (SRVSDYKHHPSDVL) lie on the Extracellular side of the membrane. His252 (nucleophile) is an active-site residue. A helical membrane pass occupies residues 259 to 279 (AGFAQGALVACCIVFFVSDLF). The segment at 276-312 (SDLFKTKTTLSLPAPAIRREILSPVDIMDRSNHHNMV) is mediates interaction with CTNND1. Over 280 to 312 (KTKTTLSLPAPAIRREILSPVDIMDRSNHHNMV) the chain is Cytoplasmic.

This sequence belongs to the PA-phosphatase related phosphoesterase family. Forms functional homodimers and homooligomers that are not required for substrate recognition and catalytic activity. Can also form heterooligomers with other PLPP2 and PLPP3. Interacts with CTNND1; negatively regulates the PLPP3-mediated stabilization of beta-catenin/CTNNB1. Post-translationally, N-glycosylated. Contains high-mannose oligosaccharides. In terms of tissue distribution, detected in epithelial cells of intestinal mucosa, lung, liver and brain.

Its subcellular location is the cell membrane. The protein localises to the basolateral cell membrane. The protein resides in the endoplasmic reticulum membrane. It is found in the endoplasmic reticulum-Golgi intermediate compartment membrane. It localises to the golgi apparatus membrane. Its subcellular location is the golgi apparatus. The protein localises to the trans-Golgi network membrane. The protein resides in the membrane raft. The catalysed reaction is a 1,2-diacyl-sn-glycero-3-phosphate + H2O = a 1,2-diacyl-sn-glycerol + phosphate. It catalyses the reaction 1,2-dihexadecanoyl-sn-glycero-3-phosphate + H2O = 1,2-dihexadecanoyl-sn-glycerol + phosphate. It carries out the reaction 1,2-di-(9Z-octadecenoyl)-sn-glycero-3-phosphate + H2O = 1,2-di-(9Z-octadecenoyl)-sn-glycerol + phosphate. The enzyme catalyses a monoacyl-sn-glycero-3-phosphate + H2O = a monoacylglycerol + phosphate. The catalysed reaction is (9Z)-octadecenoyl-sn-glycero-3-phosphate + H2O = (9Z-octadecenoyl)-glycerol + phosphate. It catalyses the reaction sphing-4-enine 1-phosphate + H2O = sphing-4-enine + phosphate. It carries out the reaction an N-acylsphing-4-enine 1-phosphate + H2O = an N-acylsphing-4-enine + phosphate. The enzyme catalyses N-(octanoyl)-sphing-4-enine-1-phosphate + H2O = N-octanoylsphing-4-enine + phosphate. The catalysed reaction is N-(9Z-octadecenoyl)-ethanolamine phosphate + H2O = N-(9Z-octadecenoyl) ethanolamine + phosphate. The protein operates within lipid metabolism; phospholipid metabolism. Its activity is regulated as follows. Magnesium-independent phospholipid phosphatase. Insensitive to N-ethylmaleimide. Inhibited by sphingosine, zinc ions and modestly by propanolol. Its function is as follows. Magnesium-independent phospholipid phosphatase of the plasma membrane that catalyzes the dephosphorylation of a variety of glycerolipid and sphingolipid phosphate esters including phosphatidate/PA, lysophosphatidate/LPA, diacylglycerol pyrophosphate/DGPP, sphingosine 1-phosphate/S1P and ceramide 1-phosphate/C1P. Also acts on N-oleoyl ethanolamine phosphate/N-(9Z-octadecenoyl)-ethanolamine phosphate, a potential physiological compound. Has both an extracellular and an intracellular phosphatase activity, allowing the hydrolysis and the cellular uptake of these bioactive lipid mediators from the milieu, regulating signal transduction in different cellular processes. Through the dephosphorylation of extracellular sphingosine-1-phosphate and the regulation of its extra- and intracellular availability, plays a role in vascular homeostasis, regulating endothelial cell migration, adhesion, survival, proliferation and the production of pro-inflammatory cytokines. By maintaining the appropriate levels of this lipid in the cerebellum, also ensure its proper development and function. Through its intracellular lipid phosphatase activity may act in early compartments of the secretory pathway, regulating the formation of Golgi to endoplasmic reticulum retrograde transport carriers. Independently of this phosphatase activity may also function in the Wnt signaling pathway and the stabilization of beta-catenin/CTNNB1, thereby regulating cell proliferation, migration and differentiation in angiogenesis or yet in tumor growth. Also plays a role in integrin-mediated cell-cell adhesion in angiogenesis. The chain is Phospholipid phosphatase 3 from Rattus norvegicus (Rat).